Here is a 154-residue protein sequence, read N- to C-terminus: Interleukin-2 (154 aa).

An N-terminal signal peptide occupies residues 1–20 (MYRMQLLSCIALSLALITNS). Residue Thr23 is glycosylated (O-linked (GalNAc...) threonine). Cys78 and Cys126 are joined by a disulfide.

It belongs to the IL-2 family.

Its subcellular location is the secreted. In terms of biological role, cytokine produced by activated CD4-positive helper T-cells and to a lesser extend activated CD8-positive T-cells and natural killer (NK) cells that plays pivotal roles in the immune response and tolerance. Binds to a receptor complex composed of either the high-affinity trimeric IL-2R (IL2RA/CD25, IL2RB/CD122 and IL2RG/CD132) or the low-affinity dimeric IL-2R (IL2RB and IL2RG). Interaction with the receptor leads to oligomerization and conformation changes in the IL-2R subunits resulting in downstream signaling starting with phosphorylation of JAK1 and JAK3. In turn, JAK1 and JAK3 phosphorylate the receptor to form a docking site leading to the phosphorylation of several substrates including STAT5. This process leads to activation of several pathways including STAT, phosphoinositide-3-kinase/PI3K and mitogen-activated protein kinase/MAPK pathways. Functions as a T-cell growth factor and can increase NK-cell cytolytic activity as well. Promotes strong proliferation of activated B-cells and subsequently immunoglobulin production. Plays a pivotal role in regulating the adaptive immune system by controlling the survival and proliferation of regulatory T-cells, which are required for the maintenance of immune tolerance. Moreover, participates in the differentiation and homeostasis of effector T-cell subsets, including Th1, Th2, Th17 as well as memory CD8-positive T-cells. This is Interleukin-2 (IL2) from Saimiri sciureus (Common squirrel monkey).